A 61-amino-acid chain; its full sequence is Small ribosomal subunit protein uS14 (61 aa).

The Zn(2+) site is built by C24, C27, C40, and C43.

It belongs to the universal ribosomal protein uS14 family. Zinc-binding uS14 subfamily. Part of the 30S ribosomal subunit. Contacts proteins S3 and S10. Zn(2+) serves as cofactor.

Its function is as follows. Binds 16S rRNA, required for the assembly of 30S particles and may also be responsible for determining the conformation of the 16S rRNA at the A site. This chain is Small ribosomal subunit protein uS14, found in Geobacillus stearothermophilus (Bacillus stearothermophilus).